Reading from the N-terminus, the 299-residue chain is Protoheme IX farnesyltransferase (299 aa).

The next 9 membrane-spanning stretches (helical) occupy residues Val25–Val45, Trp47–Val67, Leu95–Phe115, Leu119–Leu139, Ile147–Gly167, Pro173–Ile193, Leu218–His238, Leu243–Tyr263, and Ile279–Leu299.

It belongs to the UbiA prenyltransferase family. Protoheme IX farnesyltransferase subfamily.

The protein localises to the cell inner membrane. The enzyme catalyses heme b + (2E,6E)-farnesyl diphosphate + H2O = Fe(II)-heme o + diphosphate. The protein operates within porphyrin-containing compound metabolism; heme O biosynthesis; heme O from protoheme: step 1/1. Its function is as follows. Converts heme B (protoheme IX) to heme O by substitution of the vinyl group on carbon 2 of heme B porphyrin ring with a hydroxyethyl farnesyl side group. The chain is Protoheme IX farnesyltransferase from Azotobacter vinelandii (strain DJ / ATCC BAA-1303).